The sequence spans 532 residues: Cilia- and flagella-associated protein 97 (532 aa).

S19 is subject to Phosphoserine. Disordered stretches follow at residues 28–83, 116–263, 306–333, 398–421, and 485–532; these read ETNS…PVEN, IPNR…TPDI, KAAK…SLDH, LSRQ…PPKL, and GQYS…TAWL. The segment covering 35-49 has biased composition (basic and acidic residues); it reads KQNDDPKERIDKDTK. Over residues 50-63 the composition is skewed to polar residues; it reads NVNSNTGMQTTENY. Over residues 67 to 82 the composition is skewed to basic and acidic residues; the sequence is KGNERNVKFPPEHPVE. Positions 127–139 are enriched in acidic residues; sequence GEDDYYTDGEESS. T133 is subject to Phosphothreonine. Phosphoserine is present on residues S138 and S139. Composition is skewed to low complexity over residues 170–185 and 194–205; these read SSSS…SGSG and DSHLSDSSPSSK. At S218 the chain carries Phosphoserine. Positions 227–239 are enriched in polar residues; sequence IKSTETQPSSTTP. S248 bears the Phosphoserine mark. The span at 253–263 shows a compositional bias: polar residues; that stretch reads TDVSPLSTPDI. Residues 320-329 show a composition bias toward low complexity; that stretch reads SSKSSSVLDS. S330 bears the Phosphoserine mark. Residues 374-450 adopt a coiled-coil conformation; sequence GKNYSFTREE…ALLKRLEAVK (77 aa). The span at 493–503 shows a compositional bias: polar residues; sequence SRTSSATSGLS.

Belongs to the CFAP97 family.

The polypeptide is Cilia- and flagella-associated protein 97 (Homo sapiens (Human)).